A 469-amino-acid chain; its full sequence is 23S rRNA (uracil(1939)-C(5))-methyltransferase RlmD (469 aa).

Residues 11–69 (PKTSNQRLTVTVDKLDMNGVGVARWQNKPIFIAGVLPDEIVDVKVIEQKSKYARAKLIS) form the TRAM domain. [4Fe-4S] cluster contacts are provided by Cys-82, Cys-88, Cys-91, and Cys-178. Gln-300, Phe-329, Asn-334, Glu-350, Asp-377, and Asp-399 together coordinate S-adenosyl-L-methionine. Cys-425 (nucleophile) is an active-site residue.

It belongs to the class I-like SAM-binding methyltransferase superfamily. RNA M5U methyltransferase family. RlmD subfamily.

It catalyses the reaction uridine(1939) in 23S rRNA + S-adenosyl-L-methionine = 5-methyluridine(1939) in 23S rRNA + S-adenosyl-L-homocysteine + H(+). In terms of biological role, catalyzes the formation of 5-methyl-uridine at position 1939 (m5U1939) in 23S rRNA. This is 23S rRNA (uracil(1939)-C(5))-methyltransferase RlmD from Colwellia psychrerythraea (strain 34H / ATCC BAA-681) (Vibrio psychroerythus).